Consider the following 562-residue polypeptide: MAADAFLLIFGLLLTVLIVAQPLGSGLARLIEGETGTLLQKFEAGTARLFALDTTEMRWQQYAAAILTLNLIGIVVLFVLLMAQGVLPLNPENMPGLSWHLALNTAISFVTNTNWQAYSGENTLSYLSQMVGLTVQNFLAAASGIAVAFALIRAFSRRCVDTLGNAWLDLFRITLYVLLPLSLLLALFFVSQGVLQNLLPYQHLTTLDGAAQTLPMGPVASQEAIKLLGTNGGGFFGANSAHPFENPTALSNIVQMLAILLIPTALCFAFGKAVSDNRQGHALLWAMGLIFIVAAAVVMKMEVIGNPHLLALGADSAANLEGKETRFGVLTSSLYAVVTTATSTGAVNAMHDSFTALGGMVPMWLMQIGEVVFGGVGSGLYGMLLFVLLTVFIAGLMIGRSPEYLGKKIEVYEMKMTALAILIPPALVLLGTALALSTEAGRSGILNPGAHGFSEVLYAVSSAANNNGSAFAGLSVNTPFYNVLLAVAMLLGRFAVMVPVLAIAGSLVVKKRQPESKGSLSTRSPLFIGMLIAIVLLIGALTFIPALALGPVAEHLQFGLTH.

12 helical membrane-spanning segments follow: residues alanine 5–serine 25, alanine 63–alanine 83, glycine 132–isoleucine 152, leucine 175–leucine 195, leucine 250–phenylalanine 270, glutamine 279–methionine 299, phenylalanine 327–valine 347, alanine 356–valine 376, glycine 379–glycine 399, methionine 416–leucine 436, valine 483–isoleucine 503, and leucine 526–alanine 546.

This sequence belongs to the KdpA family. In terms of assembly, the system is composed of three essential subunits: KdpA, KdpB and KdpC.

The protein localises to the cell inner membrane. In terms of biological role, part of the high-affinity ATP-driven potassium transport (or Kdp) system, which catalyzes the hydrolysis of ATP coupled with the electrogenic transport of potassium into the cytoplasm. This subunit binds the periplasmic potassium ions and delivers the ions to the membrane domain of KdpB through an intramembrane tunnel. The sequence is that of Potassium-transporting ATPase potassium-binding subunit from Pectobacterium carotovorum subsp. carotovorum (strain PC1).